The primary structure comprises 49 residues: Disintegrin eristostatin (49 aa).

One can recognise a Disintegrin domain in the interval 1–49 (QEEPCATGPCCRRCKFKRAGKVCRVARGDWNDDYCTGKSCDCPKNPWNG). Intrachain disulfides connect cysteine 5–cysteine 14, cysteine 10–cysteine 35, cysteine 11–cysteine 40, and cysteine 23–cysteine 42. The Cell attachment site signature appears at 27–29 (RGD).

This sequence belongs to the venom metalloproteinase (M12B) family. P-II subfamily. P-IIa sub-subfamily. Monomer. As to expression, expressed by the venom gland.

The protein localises to the secreted. Functionally, is a potent inhibitor of ADP-induced platelet aggregation. Acts by binding to alpha-IIb/beta-3 (ITGA2B/ITGB3) receptor on the platelet surface. Binds with the same high affinity to resting and activated platelets. Also binds the alpha-4/beta-1 (ITGA4/ITGB1) integrin. Is a potent inhibitor of human and murine melanoma metastases in mouse model systems, also due to the inhibition of binding between the alpha-4/beta-1 integrin and the vascular cell adhesion protein VCAM1. Reacts neither with the integrin alpha-V/beta-3 (ITGAV/ITGB3) vitronectin receptor nor with the integrin alpha-5/beta-1 (ITGA5/ITGB1) fibronectin receptor. Has no effect on cell proliferation or angiogenesis. Specifically inhibits cell migration on fibronectin, but not that on collagen IV or laminin. May involve fibronectin-binding integrins that mediate cell migration. The protein is Disintegrin eristostatin of Eristicophis macmahoni (Leaf-nosed viper).